Reading from the N-terminus, the 252-residue chain is Hydroxyacylglutathione hydrolase (252 aa).

H54, H56, D58, H59, H111, D128, and H166 together coordinate Zn(2+).

This sequence belongs to the metallo-beta-lactamase superfamily. Glyoxalase II family. In terms of assembly, monomer. The cofactor is Zn(2+).

The catalysed reaction is an S-(2-hydroxyacyl)glutathione + H2O = a 2-hydroxy carboxylate + glutathione + H(+). It participates in secondary metabolite metabolism; methylglyoxal degradation; (R)-lactate from methylglyoxal: step 2/2. Thiolesterase that catalyzes the hydrolysis of S-D-lactoyl-glutathione to form glutathione and D-lactic acid. This is Hydroxyacylglutathione hydrolase from Aliivibrio fischeri (strain ATCC 700601 / ES114) (Vibrio fischeri).